The chain runs to 145 residues: D-aminoacyl-tRNA deacylase (145 aa).

Positions 137-138 (GP) match the Gly-cisPro motif, important for rejection of L-amino acids motif.

Belongs to the DTD family. Homodimer.

Its subcellular location is the cytoplasm. The catalysed reaction is glycyl-tRNA(Ala) + H2O = tRNA(Ala) + glycine + H(+). It catalyses the reaction a D-aminoacyl-tRNA + H2O = a tRNA + a D-alpha-amino acid + H(+). An aminoacyl-tRNA editing enzyme that deacylates mischarged D-aminoacyl-tRNAs. Also deacylates mischarged glycyl-tRNA(Ala), protecting cells against glycine mischarging by AlaRS. Acts via tRNA-based rather than protein-based catalysis; rejects L-amino acids rather than detecting D-amino acids in the active site. By recycling D-aminoacyl-tRNA to D-amino acids and free tRNA molecules, this enzyme counteracts the toxicity associated with the formation of D-aminoacyl-tRNA entities in vivo and helps enforce protein L-homochirality. In Ectopseudomonas mendocina (strain ymp) (Pseudomonas mendocina), this protein is D-aminoacyl-tRNA deacylase.